Here is a 208-residue protein sequence, read N- to C-terminus: Thiamine-phosphate synthase (208 aa).

4-amino-2-methyl-5-(diphosphooxymethyl)pyrimidine is bound by residues 37–39 (QVR) and Asn70. The Mg(2+) site is built by Asp71 and Asp90. Thr109 is a 4-amino-2-methyl-5-(diphosphooxymethyl)pyrimidine binding site. 135-137 (TTS) provides a ligand contact to 2-[(2R,5Z)-2-carboxy-4-methylthiazol-5(2H)-ylidene]ethyl phosphate. Residue Lys138 coordinates 4-amino-2-methyl-5-(diphosphooxymethyl)pyrimidine. Gly166 provides a ligand contact to 2-[(2R,5Z)-2-carboxy-4-methylthiazol-5(2H)-ylidene]ethyl phosphate.

The protein belongs to the thiamine-phosphate synthase family. Mg(2+) is required as a cofactor.

The enzyme catalyses 2-[(2R,5Z)-2-carboxy-4-methylthiazol-5(2H)-ylidene]ethyl phosphate + 4-amino-2-methyl-5-(diphosphooxymethyl)pyrimidine + 2 H(+) = thiamine phosphate + CO2 + diphosphate. It catalyses the reaction 2-(2-carboxy-4-methylthiazol-5-yl)ethyl phosphate + 4-amino-2-methyl-5-(diphosphooxymethyl)pyrimidine + 2 H(+) = thiamine phosphate + CO2 + diphosphate. The catalysed reaction is 4-methyl-5-(2-phosphooxyethyl)-thiazole + 4-amino-2-methyl-5-(diphosphooxymethyl)pyrimidine + H(+) = thiamine phosphate + diphosphate. It functions in the pathway cofactor biosynthesis; thiamine diphosphate biosynthesis; thiamine phosphate from 4-amino-2-methyl-5-diphosphomethylpyrimidine and 4-methyl-5-(2-phosphoethyl)-thiazole: step 1/1. Functionally, condenses 4-methyl-5-(beta-hydroxyethyl)thiazole monophosphate (THZ-P) and 2-methyl-4-amino-5-hydroxymethyl pyrimidine pyrophosphate (HMP-PP) to form thiamine monophosphate (TMP). In Salinispora arenicola (strain CNS-205), this protein is Thiamine-phosphate synthase.